The chain runs to 537 residues: Probable E3 ubiquitin-protein ligase ARI3 (537 aa).

The disordered stretch occupies residues 1 to 30 (MDDDYMMLDDDYGEEEDENYSEDDNYSEAE). Positions 117–331 (KTMKCDVCME…IAGHSCGRYK (215 aa)) are TRIAD supradomain. Zn(2+) is bound by residues Cys-121, Cys-124, Cys-139, His-141, Cys-144, Cys-147, Cys-166, Cys-171, Cys-210, Cys-216, Cys-234, Cys-236, Cys-241, Cys-244, His-249, Cys-254, Cys-281, and Cys-284. The RING-type 1 zinc-finger motif lies at 121–171 (CDVCMEDDLPSNVMTRMECGHRFCNDCWIGHFTVKINEGESKRILCMAHEC). An IBR-type zinc finger spans residues 190–254 (DRYDRFLIES…LSESHSPCSC (65 aa)). The RING-type 2; atypical zinc-finger motif lies at 281–309 (CPKCSKPIQKRDGCNLMTCKCGQHFCWLC). Cys-294 is an active-site residue. Cys-299, Cys-301, Cys-306, Cys-309, His-317, and Cys-327 together coordinate Zn(2+).

It belongs to the RBR family. Ariadne subfamily. Zn(2+) serves as cofactor. As to expression, ubiquitous.

The catalysed reaction is [E2 ubiquitin-conjugating enzyme]-S-ubiquitinyl-L-cysteine + [acceptor protein]-L-lysine = [E2 ubiquitin-conjugating enzyme]-L-cysteine + [acceptor protein]-N(6)-ubiquitinyl-L-lysine.. It functions in the pathway protein modification; protein ubiquitination. Might act as an E3 ubiquitin-protein ligase, or as part of E3 complex, which accepts ubiquitin from specific E2 ubiquitin-conjugating enzymes and then transfers it to substrates. The chain is Probable E3 ubiquitin-protein ligase ARI3 (ARI3) from Arabidopsis thaliana (Mouse-ear cress).